Here is a 156-residue protein sequence, read N- to C-terminus: Small ribosomal subunit protein uS7 (156 aa).

This sequence belongs to the universal ribosomal protein uS7 family. As to quaternary structure, part of the 30S ribosomal subunit. Contacts proteins S9 and S11.

Its function is as follows. One of the primary rRNA binding proteins, it binds directly to 16S rRNA where it nucleates assembly of the head domain of the 30S subunit. Is located at the subunit interface close to the decoding center, probably blocks exit of the E-site tRNA. The protein is Small ribosomal subunit protein uS7 of Aliivibrio salmonicida (strain LFI1238) (Vibrio salmonicida (strain LFI1238)).